A 421-amino-acid chain; its full sequence is Large ribosomal subunit protein uL4 (421 aa).

Ala2 bears the N-acetylalanine mark. N6-acetyllysine is present on Lys14. Arg97 bears the Omega-N-methylarginine mark. Lys106 bears the N6-acetyllysine mark. Lys239 participates in a covalent cross-link: Glycyl lysine isopeptide (Lys-Gly) (interchain with G-Cter in SUMO2). Lys259 is modified (N6-acetyllysine). Thr266 carries the post-translational modification Phosphothreonine. Residue Ser290 is modified to Phosphoserine. Position 300 is a citrulline (Arg300). Residue Lys327 forms a Glycyl lysine isopeptide (Lys-Gly) (interchain with G-Cter in SUMO2) linkage. Lys333 and Lys353 each carry N6-acetyllysine. A disordered region spans residues 359–421 (EAKSEEKGVP…PTTEEKKPAA (63 aa)). Lys361 carries the N6-acetyllysine; alternate modification. Lys361 participates in a covalent cross-link: Glycyl lysine isopeptide (Lys-Gly) (interchain with G-Cter in SUMO1); alternate. A Phosphoserine modification is found at Ser362. Over residues 368–391 (PGKKPRRKKGKKTVGVKKPKKPVV) the composition is skewed to basic residues. The segment covering 401-421 (PAADKKPAEKKPTTEEKKPAA) has biased composition (basic and acidic residues).

It belongs to the universal ribosomal protein uL4 family. In terms of assembly, component of the large ribosomal subunit. May bind IPO9 with low affinity. Interacts with RBM3. Citrullinated by PADI4.

It localises to the cytoplasm. Its function is as follows. Component of the large ribosomal subunit. The ribosome is a large ribonucleoprotein complex responsible for the synthesis of proteins in the cell. The chain is Large ribosomal subunit protein uL4 (RPL4) from Canis lupus familiaris (Dog).